The following is a 946-amino-acid chain: Protocadherin alpha-10 (946 aa).

The N-terminal stretch at Met1 to Gly30 is a signal peptide. 6 Cadherin domains span residues Gln31 to Phe134, Pro135 to Phe243, Asp244 to Ile351, Ile352 to Phe456, Ala457 to Leu566, and Val582 to Ala679. Topologically, residues Gln31–Asn697 are extracellular. Asn258 is a glycosylation site (N-linked (GlcNAc...) asparagine). An N-linked (GlcNAc...) asparagine glycan is attached at Asn549. The helical transmembrane segment at Val698 to Tyr718 threads the bilayer. Over Thr719–Gln946 the chain is Cytoplasmic. 6 PXXP repeats span residues Pro734–Pro737, Pro774–Pro777, Pro795–Pro798, Pro828–Pro831, Pro869–Pro872, and Pro887–Pro890. Residues Pro734–Pro890 form a 6 X 4 AA repeats of P-X-X-P region. Disordered regions lie at residues Ala826–Pro852 and Phe865–Gln946. The span at Asp905–Lys919 shows a compositional bias: basic and acidic residues.

It localises to the cell membrane. In terms of biological role, potential calcium-dependent cell-adhesion protein. May be involved in the establishment and maintenance of specific neuronal connections in the brain. The protein is Protocadherin alpha-10 of Mus musculus (Mouse).